A 385-amino-acid polypeptide reads, in one-letter code: Gibberellin 20 oxidase 5 (385 aa).

The Fe2OG dioxygenase domain occupies 224–324 (DGSGIFRCNY…RRSLVFFSCP (101 aa)). Fe cation contacts are provided by histidine 249, aspartate 251, and histidine 305. Arginine 315 is a catalytic residue.

The protein belongs to the iron/ascorbate-dependent oxidoreductase family. GA20OX subfamily. Fe(2+) is required as a cofactor. It depends on L-ascorbate as a cofactor. Expressed in 3-day-old seedlings and siliques. Detected in dry seeds, roots, old leaves and inflorescences.

The enzyme catalyses gibberellin A12 + 2 2-oxoglutarate + 3 O2 + H(+) = gibberellin A9 + 2 succinate + 3 CO2 + 2 H2O. It carries out the reaction gibberellin A53 + 2 2-oxoglutarate + 3 O2 + H(+) = gibberellin A20 + 2 succinate + 3 CO2 + 2 H2O. The protein operates within plant hormone biosynthesis; gibberellin biosynthesis. Functionally, key oxidase enzyme in the biosynthesis of gibberellin that catalyzes the conversion of GA12 and GA53 to GA9 and GA20 respectively, via a three-step oxidation at C-20 of the GA skeleton. In Arabidopsis thaliana (Mouse-ear cress), this protein is Gibberellin 20 oxidase 5 (GA20OX5).